The sequence spans 68 residues: MIFPIRCFSCGAVISEVYEEYRTRLKDGENPEEILNDLEVKKYCCRRMFASHRLDNDRELFDDIVEYK.

The Zn(2+) site is built by Cys-7, Cys-10, Cys-44, and Cys-45.

The protein belongs to the archaeal Rpo10/eukaryotic RPB10 RNA polymerase subunit family. As to quaternary structure, part of the RNA polymerase complex. Requires Zn(2+) as cofactor.

Its subcellular location is the cytoplasm. It carries out the reaction RNA(n) + a ribonucleoside 5'-triphosphate = RNA(n+1) + diphosphate. Functionally, DNA-dependent RNA polymerase (RNAP) catalyzes the transcription of DNA into RNA using the four ribonucleoside triphosphates as substrates. The sequence is that of DNA-directed RNA polymerase subunit Rpo10 from Methanococcus maripaludis (strain C7 / ATCC BAA-1331).